The primary structure comprises 511 residues: Chaperone protein HscA (511 aa).

This sequence belongs to the heat shock protein 70 family.

Functionally, chaperone involved in the maturation of iron-sulfur cluster-containing proteins. Has a low intrinsic ATPase activity which is markedly stimulated by HscB. Involved in the maturation of IscU. This Buchnera aphidicola subsp. Baizongia pistaciae (strain Bp) protein is Chaperone protein HscA (hscA).